Consider the following 603-residue polypeptide: D-3-phosphoglycerate dehydrogenase 1, chloroplastic (603 aa).

The transit peptide at 1 to 54 (MSATAAASSSIAVATNSLRNVTLSSRSPLPSAISVAFPSRGRNTLQRRLVLVSC) directs the protein to the chloroplast. Residues 210–211 (KV), D230, 289–291 (VAR), and D315 each bind NAD(+). The active site involves R291. E320 is an active-site residue. H339 (proton donor) is an active-site residue. An NAD(+)-binding site is contributed by 339–342 (HLGA). Positions 531 to 603 (IILCRQVDQP…AVEEFVFLKL (73 aa)) constitute an ACT domain.

Belongs to the D-isomer specific 2-hydroxyacid dehydrogenase family. In terms of tissue distribution, ubiquitous, but highly expressed in roots. Expressed in vasculature, root and shoot meristems, distal part of cotyledons and leaves, anther, stigma and pollen grains. Detected at the tip of the cotyledons in late embryos.

The protein resides in the plastid. It is found in the chloroplast. It carries out the reaction (2R)-3-phosphoglycerate + NAD(+) = 3-phosphooxypyruvate + NADH + H(+). It functions in the pathway amino-acid biosynthesis; L-serine biosynthesis; L-serine from 3-phospho-D-glycerate: step 1/3. Partially inhibited by 5 mM serine. Involved in the plastidial phosphorylated pathway of serine biosynthesis (PPSB). Required for mature pollen development. The sequence is that of D-3-phosphoglycerate dehydrogenase 1, chloroplastic (PGDH1) from Arabidopsis thaliana (Mouse-ear cress).